The chain runs to 818 residues: Phosphoenolpyruvate synthase (818 aa).

The Tele-phosphohistidine intermediate role is filled by H442. The substrate site is built by R532, R601, E703, G724, S725, N726, and D727. E703 contributes to the Mg(2+) binding site. D727 is a Mg(2+) binding site. C774 functions as the Proton donor in the catalytic mechanism.

The protein belongs to the PEP-utilizing enzyme family. Mg(2+) is required as a cofactor.

It catalyses the reaction pyruvate + ATP + H2O = phosphoenolpyruvate + AMP + phosphate + 2 H(+). The protein operates within carbohydrate biosynthesis; gluconeogenesis. Functionally, catalyzes the phosphorylation of pyruvate to phosphoenolpyruvate. In Synechocystis sp. (strain ATCC 27184 / PCC 6803 / Kazusa), this protein is Phosphoenolpyruvate synthase (ppsA).